Here is a 495-residue protein sequence, read N- to C-terminus: Glutamyl-tRNA(Gln) amidotransferase subunit A (495 aa).

Active-site charge relay system residues include Lys75 and Ser150. Ser174 functions as the Acyl-ester intermediate in the catalytic mechanism.

It belongs to the amidase family. GatA subfamily. Heterotrimer of A, B and C subunits.

The catalysed reaction is L-glutamyl-tRNA(Gln) + L-glutamine + ATP + H2O = L-glutaminyl-tRNA(Gln) + L-glutamate + ADP + phosphate + H(+). Functionally, allows the formation of correctly charged Gln-tRNA(Gln) through the transamidation of misacylated Glu-tRNA(Gln) in organisms which lack glutaminyl-tRNA synthetase. The reaction takes place in the presence of glutamine and ATP through an activated gamma-phospho-Glu-tRNA(Gln). The sequence is that of Glutamyl-tRNA(Gln) amidotransferase subunit A from Paraburkholderia xenovorans (strain LB400).